A 158-amino-acid polypeptide reads, in one-letter code: Endoribonuclease YbeY (158 aa).

H119, H123, and H129 together coordinate Zn(2+).

It belongs to the endoribonuclease YbeY family. Requires Zn(2+) as cofactor.

The protein localises to the cytoplasm. Its function is as follows. Single strand-specific metallo-endoribonuclease involved in late-stage 70S ribosome quality control and in maturation of the 3' terminus of the 16S rRNA. The chain is Endoribonuclease YbeY from Shewanella sediminis (strain HAW-EB3).